Here is a 187-residue protein sequence, read N- to C-terminus: Large ribosomal subunit protein uL5 (187 aa).

Belongs to the universal ribosomal protein uL5 family. In terms of assembly, part of the 50S ribosomal subunit; part of the 5S rRNA/L5/L18/L25 subcomplex. Contacts the 5S rRNA and the P site tRNA. Forms a bridge to the 30S subunit in the 70S ribosome.

This is one of the proteins that bind and probably mediate the attachment of the 5S RNA into the large ribosomal subunit, where it forms part of the central protuberance. In the 70S ribosome it contacts protein S13 of the 30S subunit (bridge B1b), connecting the 2 subunits; this bridge is implicated in subunit movement. Contacts the P site tRNA; the 5S rRNA and some of its associated proteins might help stabilize positioning of ribosome-bound tRNAs. The polypeptide is Large ribosomal subunit protein uL5 (Dinoroseobacter shibae (strain DSM 16493 / NCIMB 14021 / DFL 12)).